The primary structure comprises 313 residues: Zinc transporter ZitB (313 aa).

At 1-20 (MAHSHSHTSSHLPEDNNARR) the chain is on the cytoplasmic side. A helical membrane pass occupies residues 21 to 41 (LLYAFGVTAGFMLVEVVGGFL). At 42 to 47 (SGSLAL) the chain is on the periplasmic side. Residues 48–68 (LADAGHMLTDTAALLFALLAV) traverse the membrane as a helical segment. The Cytoplasmic portion of the chain corresponds to 69-89 (QFSRRPPTIRHTFGWLRLTTL). The chain crosses the membrane as a helical span at residues 90–110 (AAFVNAIALVVITILIVWEAI). The Periplasmic portion of the chain corresponds to 111 to 121 (ERFRTPRPVEG). Residues 122–142 (GMMMAIAVAGLLANILSFWLL) form a helical membrane-spanning segment. Residues 143–159 (HHGSEEKNLNVRAAALH) lie on the Cytoplasmic side of the membrane. A helical transmembrane segment spans residues 160–180 (VLGDLLGSVGAIIAALIIIWT). Position 181 (Gly181) is a topological domain, periplasmic. A helical membrane pass occupies residues 182-202 (WTPADPILSILVSLLVLRSAW). Topologically, residues 203–313 (RLLKDSVNEL…GVSGHSHHHH (111 aa)) are cytoplasmic.

It belongs to the cation diffusion facilitator (CDF) transporter (TC 2.A.4) family. SLC30A subfamily.

The protein localises to the cell inner membrane. Functionally, involved in zinc efflux across the cytoplasmic membrane, thus reducing zinc accumulation in the cytoplasm and rendering bacteria more resistant to zinc. It may contribute to zinc homeostasis at low concentrations of zinc, whereas ZntA is required for growth at more toxic concentrations. The protein is Zinc transporter ZitB (zitB) of Escherichia coli (strain K12).